We begin with the raw amino-acid sequence, 286 residues long: ATP synthase gamma chain (286 aa).

This sequence belongs to the ATPase gamma chain family. As to quaternary structure, F-type ATPases have 2 components, CF(1) - the catalytic core - and CF(0) - the membrane proton channel. CF(1) has five subunits: alpha(3), beta(3), gamma(1), delta(1), epsilon(1). CF(0) has three main subunits: a, b and c.

The protein localises to the cell membrane. Produces ATP from ADP in the presence of a proton gradient across the membrane. The gamma chain is believed to be important in regulating ATPase activity and the flow of protons through the CF(0) complex. The chain is ATP synthase gamma chain from Ruminococcus albus (strain ATCC 27210 / DSM 20455 / JCM 14654 / NCDO 2250 / 7).